Consider the following 113-residue polypeptide: Iron-sulfur cluster insertion protein ErpA (113 aa).

The iron-sulfur cluster site is built by cysteine 41, cysteine 105, and cysteine 107.

It belongs to the HesB/IscA family. Homodimer. It depends on iron-sulfur cluster as a cofactor.

In terms of biological role, required for insertion of 4Fe-4S clusters for at least IspG. The chain is Iron-sulfur cluster insertion protein ErpA from Actinobacillus pleuropneumoniae serotype 7 (strain AP76).